Reading from the N-terminus, the 21-residue chain is Fibrinogen beta chain (21 aa).

Gln-1 is subject to Pyrrolidone carboxylic acid. Over residues 1 to 11 (QHSTDYDEVED) the composition is skewed to acidic residues. The segment at 1-21 (QHSTDYDEVEDDRAKLHLDAR) is disordered. A glycan (O-linked (GalNAc...) threonine) is linked at Thr-4. A Sulfotyrosine modification is found at Tyr-6. A compositionally biased stretch (basic and acidic residues) spans 12 to 21 (DRAKLHLDAR).

As to quaternary structure, heterohexamer; disulfide linked. Contains 2 sets of 3 non-identical chains (alpha, beta and gamma). The 2 heterotrimers are in head to head conformation with the N-termini in a small central domain. Conversion of fibrinogen to fibrin is triggered by thrombin, which cleaves fibrinopeptides A and B from alpha and beta chains, and thus exposes the N-terminal polymerization sites responsible for the formation of the soft clot.

It is found in the secreted. Cleaved by the protease thrombin to yield monomers which, together with fibrinogen alpha (FGA) and fibrinogen gamma (FGG), polymerize to form an insoluble fibrin matrix. Fibrin has a major function in hemostasis as one of the primary components of blood clots. In addition, functions during the early stages of wound repair to stabilize the lesion and guide cell migration during re-epithelialization. Was originally thought to be essential for platelet aggregation, based on in vitro studies using anticoagulated blood. However subsequent studies have shown that it is not absolutely required for thrombus formation in vivo. Enhances expression of SELP in activated platelets. Maternal fibrinogen is essential for successful pregnancy. Fibrin deposition is also associated with infection, where it protects against IFNG-mediated hemorrhage. May also facilitate the antibacterial immune response via both innate and T-cell mediated pathways. In Muntiacus muntjak (Barking deer), this protein is Fibrinogen beta chain (FGB).